The chain runs to 1054 residues: Putative disease resistance RPP13-like protein 1 (1054 aa).

Leucine-zipper stretches follow at residues L9–L20 and L39–L53. Residues D117–L147 adopt a coiled-coil conformation. The 311-residue stretch at L152 to S462 folds into the NB-ARC domain. G203–T210 provides a ligand contact to ATP. LRR repeat units lie at residues R579 to N600, H603 to M624, N626 to L648, N650 to K672, and T676 to H697. The interval P1018–D1054 is disordered. Basic and acidic residues predominate over residues R1043–D1054.

It belongs to the disease resistance NB-LRR family. RPP13 subfamily.

Potential disease resistance protein. The sequence is that of Putative disease resistance RPP13-like protein 1 (RPPL1) from Arabidopsis thaliana (Mouse-ear cress).